A 360-amino-acid chain; its full sequence is Alanine racemase (360 aa).

Catalysis depends on K34, which acts as the Proton acceptor; specific for D-alanine. K34 carries the post-translational modification N6-(pyridoxal phosphate)lysine. R129 contacts substrate. The active-site Proton acceptor; specific for L-alanine is the Y254. M302 lines the substrate pocket.

Belongs to the alanine racemase family. The cofactor is pyridoxal 5'-phosphate.

It catalyses the reaction L-alanine = D-alanine. The protein operates within amino-acid biosynthesis; D-alanine biosynthesis; D-alanine from L-alanine: step 1/1. In terms of biological role, catalyzes the interconversion of L-alanine and D-alanine. May also act on other amino acids. In Pectobacterium atrosepticum (strain SCRI 1043 / ATCC BAA-672) (Erwinia carotovora subsp. atroseptica), this protein is Alanine racemase (alr).